We begin with the raw amino-acid sequence, 391 residues long: NADH-quinone oxidoreductase subunit D (391 aa).

It belongs to the complex I 49 kDa subunit family. NDH-1 is composed of 14 different subunits. Subunits NuoB, C, D, E, F, and G constitute the peripheral sector of the complex.

The protein localises to the cell inner membrane. It carries out the reaction a quinone + NADH + 5 H(+)(in) = a quinol + NAD(+) + 4 H(+)(out). In terms of biological role, NDH-1 shuttles electrons from NADH, via FMN and iron-sulfur (Fe-S) centers, to quinones in the respiratory chain. The immediate electron acceptor for the enzyme in this species is believed to be ubiquinone. Couples the redox reaction to proton translocation (for every two electrons transferred, four hydrogen ions are translocated across the cytoplasmic membrane), and thus conserves the redox energy in a proton gradient. The chain is NADH-quinone oxidoreductase subunit D from Pelagibacter ubique (strain HTCC1062).